A 147-amino-acid polypeptide reads, in one-letter code: Hemoglobin subunit beta (147 aa).

Residues 2-147 (HWEDAEKQYI…ISHSLGREYH (146 aa)) form the Globin domain. Heme b contacts are provided by H63 and H92.

Belongs to the globin family. In terms of assembly, heterotetramer of two alpha chains and two beta chains. In terms of tissue distribution, red blood cells.

Involved in oxygen transport from the lung to the various peripheral tissues. The sequence is that of Hemoglobin subunit beta (HBB) from Lepidosiren paradoxus (South American lungfish).